Reading from the N-terminus, the 227-residue chain is Germin-like protein 3-5 (227 aa).

Positions Met-1–Ala-29 are cleaved as a signal peptide. Cys-36 and Cys-51 are oxidised to a cystine. In terms of domain architecture, Cupin type-1 spans Ser-65–Glu-217. Asn-78 and Asn-81 each carry an N-linked (GlcNAc...) asparagine glycan. Residues His-114, His-116, Glu-121, and His-163 each coordinate Mn(2+).

It belongs to the germin family. As to quaternary structure, oligomer (believed to be a pentamer but probably hexamer).

The protein localises to the secreted. The protein resides in the extracellular space. It is found in the apoplast. May play a role in plant defense. Probably has no oxalate oxidase activity even if the active site is conserved. This Oryza sativa subsp. japonica (Rice) protein is Germin-like protein 3-5.